The following is a 235-amino-acid chain: Ubiquinone/menaquinone biosynthesis C-methyltransferase UbiE (235 aa).

Residues threonine 60, aspartate 80, 106–107 (DV), and serine 123 contribute to the S-adenosyl-L-methionine site.

Belongs to the class I-like SAM-binding methyltransferase superfamily. MenG/UbiE family.

It catalyses the reaction a 2-demethylmenaquinol + S-adenosyl-L-methionine = a menaquinol + S-adenosyl-L-homocysteine + H(+). It carries out the reaction a 2-methoxy-6-(all-trans-polyprenyl)benzene-1,4-diol + S-adenosyl-L-methionine = a 5-methoxy-2-methyl-3-(all-trans-polyprenyl)benzene-1,4-diol + S-adenosyl-L-homocysteine + H(+). It participates in quinol/quinone metabolism; menaquinone biosynthesis; menaquinol from 1,4-dihydroxy-2-naphthoate: step 2/2. It functions in the pathway cofactor biosynthesis; ubiquinone biosynthesis. Its function is as follows. Methyltransferase required for the conversion of demethylmenaquinol (DMKH2) to menaquinol (MKH2) and the conversion of 2-polyprenyl-6-methoxy-1,4-benzoquinol (DDMQH2) to 2-polyprenyl-3-methyl-6-methoxy-1,4-benzoquinol (DMQH2). In Bdellovibrio bacteriovorus (strain ATCC 15356 / DSM 50701 / NCIMB 9529 / HD100), this protein is Ubiquinone/menaquinone biosynthesis C-methyltransferase UbiE.